A 267-amino-acid polypeptide reads, in one-letter code: 3-methyl-2-oxobutanoate hydroxymethyltransferase (267 aa).

2 residues coordinate Mg(2+): Asp-42 and Asp-86. Residues 42-43 (DS), Asp-86, and Lys-116 contribute to the 3-methyl-2-oxobutanoate site. Glu-118 contacts Mg(2+). Catalysis depends on Glu-185, which acts as the Proton acceptor.

This sequence belongs to the PanB family. Homodecamer; pentamer of dimers. The cofactor is Mg(2+).

It localises to the cytoplasm. It carries out the reaction 3-methyl-2-oxobutanoate + (6R)-5,10-methylene-5,6,7,8-tetrahydrofolate + H2O = 2-dehydropantoate + (6S)-5,6,7,8-tetrahydrofolate. It participates in cofactor biosynthesis; (R)-pantothenate biosynthesis; (R)-pantoate from 3-methyl-2-oxobutanoate: step 1/2. Catalyzes the reversible reaction in which hydroxymethyl group from 5,10-methylenetetrahydrofolate is transferred onto alpha-ketoisovalerate to form ketopantoate. The polypeptide is 3-methyl-2-oxobutanoate hydroxymethyltransferase (Parasynechococcus marenigrum (strain WH8102)).